The sequence spans 352 residues: UDP-N-acetylglucosamine--N-acetylmuramyl-(pentapeptide) pyrophosphoryl-undecaprenol N-acetylglucosamine transferase (352 aa).

Ser-195 and Gln-287 together coordinate UDP-N-acetyl-alpha-D-glucosamine.

Belongs to the glycosyltransferase 28 family. MurG subfamily.

Its subcellular location is the cell membrane. It carries out the reaction Mur2Ac(oyl-L-Ala-gamma-D-Glu-L-Lys-D-Ala-D-Ala)-di-trans,octa-cis-undecaprenyl diphosphate + UDP-N-acetyl-alpha-D-glucosamine = beta-D-GlcNAc-(1-&gt;4)-Mur2Ac(oyl-L-Ala-gamma-D-Glu-L-Lys-D-Ala-D-Ala)-di-trans,octa-cis-undecaprenyl diphosphate + UDP + H(+). The protein operates within cell wall biogenesis; peptidoglycan biosynthesis. Its function is as follows. Cell wall formation. Catalyzes the transfer of a GlcNAc subunit on undecaprenyl-pyrophosphoryl-MurNAc-pentapeptide (lipid intermediate I) to form undecaprenyl-pyrophosphoryl-MurNAc-(pentapeptide)GlcNAc (lipid intermediate II). The chain is UDP-N-acetylglucosamine--N-acetylmuramyl-(pentapeptide) pyrophosphoryl-undecaprenol N-acetylglucosamine transferase from Streptococcus pneumoniae (strain Hungary19A-6).